The following is a 160-amino-acid chain: Tic20 family protein (160 aa).

Transmembrane regions (helical) follow at residues 13–33 (FFSA…GGFL), 53–73 (FYYQ…MAVV), 87–107 (MQAI…AYVI), and 122–142 (NFAF…SVLG).

It belongs to the Tic20 family.

Its subcellular location is the cell membrane. The protein is Tic20 family protein of Synechocystis sp. (strain ATCC 27184 / PCC 6803 / Kazusa).